A 365-amino-acid polypeptide reads, in one-letter code: Aminomethyltransferase (365 aa).

This sequence belongs to the GcvT family. As to quaternary structure, the glycine cleavage system is composed of four proteins: P, T, L and H.

It carries out the reaction N(6)-[(R)-S(8)-aminomethyldihydrolipoyl]-L-lysyl-[protein] + (6S)-5,6,7,8-tetrahydrofolate = N(6)-[(R)-dihydrolipoyl]-L-lysyl-[protein] + (6R)-5,10-methylene-5,6,7,8-tetrahydrofolate + NH4(+). The glycine cleavage system catalyzes the degradation of glycine. The polypeptide is Aminomethyltransferase (Yersinia pseudotuberculosis serotype O:3 (strain YPIII)).